A 284-amino-acid chain; its full sequence is Tropomyosin (284 aa).

Residues 1–280 adopt a coiled-coil conformation; sequence MDAIKKKMQA…SDELDQTFAE (280 aa).

Belongs to the tropomyosin family. Homodimer.

In terms of biological role, tropomyosin, in association with the troponin complex, plays a central role in the calcium dependent regulation of muscle contraction. The sequence is that of Tropomyosin from Sinonovacula constricta (Razor clam).